The following is a 174-amino-acid chain: N5-carboxyaminoimidazole ribonucleotide mutase (174 aa).

Substrate is bound by residues S15, D18, and R45.

It belongs to the AIR carboxylase family. Class I subfamily.

The enzyme catalyses 5-carboxyamino-1-(5-phospho-D-ribosyl)imidazole + H(+) = 5-amino-1-(5-phospho-D-ribosyl)imidazole-4-carboxylate. It participates in purine metabolism; IMP biosynthesis via de novo pathway; 5-amino-1-(5-phospho-D-ribosyl)imidazole-4-carboxylate from 5-amino-1-(5-phospho-D-ribosyl)imidazole (N5-CAIR route): step 2/2. In terms of biological role, catalyzes the conversion of N5-carboxyaminoimidazole ribonucleotide (N5-CAIR) to 4-carboxy-5-aminoimidazole ribonucleotide (CAIR). The polypeptide is N5-carboxyaminoimidazole ribonucleotide mutase (Pyrococcus abyssi (strain GE5 / Orsay)).